Reading from the N-terminus, the 104-residue chain is L-rhamnose mutarotase (104 aa).

Y18 contacts substrate. Residue H22 is the Proton donor of the active site. Substrate contacts are provided by residues Y41 and 76 to 77; that span reads WW.

It belongs to the rhamnose mutarotase family. As to quaternary structure, homodimer.

The protein resides in the cytoplasm. The enzyme catalyses alpha-L-rhamnose = beta-L-rhamnose. Its pathway is carbohydrate metabolism; L-rhamnose metabolism. In terms of biological role, involved in the anomeric conversion of L-rhamnose. This is L-rhamnose mutarotase from Burkholderia ambifaria (strain MC40-6).